The sequence spans 282 residues: 4-diphosphocytidyl-2-C-methyl-D-erythritol kinase (282 aa).

Lysine 11 is an active-site residue. Residue 95–105 (PMGGGVGGGSS) participates in ATP binding. The active site involves aspartate 137.

Belongs to the GHMP kinase family. IspE subfamily.

It catalyses the reaction 4-CDP-2-C-methyl-D-erythritol + ATP = 4-CDP-2-C-methyl-D-erythritol 2-phosphate + ADP + H(+). It participates in isoprenoid biosynthesis; isopentenyl diphosphate biosynthesis via DXP pathway; isopentenyl diphosphate from 1-deoxy-D-xylulose 5-phosphate: step 3/6. In terms of biological role, catalyzes the phosphorylation of the position 2 hydroxy group of 4-diphosphocytidyl-2C-methyl-D-erythritol. The chain is 4-diphosphocytidyl-2-C-methyl-D-erythritol kinase from Haemophilus ducreyi (strain 35000HP / ATCC 700724).